The chain runs to 238 residues: Protein LicA homolog (238 aa).

It belongs to the peptidase S49 family.

The chain is Protein LicA homolog (licA) from Mycoplasma capricolum subsp. capricolum (strain California kid / ATCC 27343 / NCTC 10154).